We begin with the raw amino-acid sequence, 260 residues long: Uroplakin-1b (260 aa).

The Cytoplasmic portion of the chain corresponds to 1 to 15 (MAKDNSTVRCFQGLL). Residues 16–36 (IFGNVIIGCCGIALTAECIFF) form a helical membrane-spanning segment. At 37–60 (VSDQHSLYPLLEATDNDDIYGAAW) the chain is on the extracellular side. Residues 61–81 (IGIFVGICLFCLSVLGIVGIM) traverse the membrane as a helical segment. At 82 to 86 (KSSRK) the chain is on the cytoplasmic side. The chain crosses the membrane as a helical span at residues 87 to 107 (ILLAYFILMFIVYAFEVASCI). Residues 108 to 229 (TAATQQDFFT…ELISGPMNRH (122 aa)) are Extracellular-facing. A helical membrane pass occupies residues 230-250 (AWGVAWFGFAILCWTFWVLLG). Topologically, residues 251–260 (TMFYWSRIEY) are cytoplasmic.

This sequence belongs to the tetraspanin (TM4SF) family. Heterodimer with uroplakin-3A (UPK3A) or uroplakin-3B (UPK3B). Post-translationally, N-glycosylated with high-mannose oligosaccharides. As to expression, bladder epithelium.

Its subcellular location is the membrane. Its function is as follows. Component of the asymmetric unit membrane (AUM); a highly specialized biomembrane elaborated by terminally differentiated urothelial cells. May play an important role in normal bladder epithelial physiology, possibly in regulating membrane permeability of superficial umbrella cells or in stabilizing the apical membrane through AUM/cytoskeletal interactions. The protein is Uroplakin-1b (UPK1B) of Homo sapiens (Human).